Here is a 97-residue protein sequence, read N- to C-terminus: MSLYDIIRKPIITEASMAAMDQKKYTFEVDSRAHKLLIKQAVEAVFDVKVASVNTISVKPKSKRVGKYTGTKSGYKKAIVTLTEDSKKIEIFGEDAE.

Belongs to the universal ribosomal protein uL23 family. Part of the 50S ribosomal subunit. Contacts protein L29, and trigger factor when it is bound to the ribosome.

Functionally, one of the early assembly proteins it binds 23S rRNA. One of the proteins that surrounds the polypeptide exit tunnel on the outside of the ribosome. Forms the main docking site for trigger factor binding to the ribosome. The sequence is that of Large ribosomal subunit protein uL23 from Lactococcus lactis subsp. cremoris (strain SK11).